The following is a 397-amino-acid chain: Arginine biosynthesis bifunctional protein ArgJ (397 aa).

Positions 147, 173, 184, 270, 392, and 397 each coordinate substrate. The active-site Nucleophile is Thr184.

The protein belongs to the ArgJ family. As to quaternary structure, heterotetramer of two alpha and two beta chains.

Its subcellular location is the cytoplasm. It carries out the reaction N(2)-acetyl-L-ornithine + L-glutamate = N-acetyl-L-glutamate + L-ornithine. The catalysed reaction is L-glutamate + acetyl-CoA = N-acetyl-L-glutamate + CoA + H(+). It functions in the pathway amino-acid biosynthesis; L-arginine biosynthesis; L-ornithine and N-acetyl-L-glutamate from L-glutamate and N(2)-acetyl-L-ornithine (cyclic): step 1/1. The protein operates within amino-acid biosynthesis; L-arginine biosynthesis; N(2)-acetyl-L-ornithine from L-glutamate: step 1/4. Catalyzes two activities which are involved in the cyclic version of arginine biosynthesis: the synthesis of N-acetylglutamate from glutamate and acetyl-CoA as the acetyl donor, and of ornithine by transacetylation between N(2)-acetylornithine and glutamate. The chain is Arginine biosynthesis bifunctional protein ArgJ from Streptococcus mutans serotype c (strain ATCC 700610 / UA159).